We begin with the raw amino-acid sequence, 142 residues long: MAVQRTFSIIKPDAVAKNVIGKIVSRFETNGLKVVASKMKHLSRQEAEGFYAVHKDRPFFKDLVDFMVSGPVVLQVLEGEDAIAKNRTLMGATDPKKAEPGTIRADFAESIDANAVHGSDAPETAAVEIAYFFPASEVYAGR.

6 residues coordinate ATP: K11, F59, R87, T93, R104, and N114. H117 acts as the Pros-phosphohistidine intermediate in catalysis.

This sequence belongs to the NDK family. In terms of assembly, homotetramer. Mg(2+) is required as a cofactor.

It localises to the cytoplasm. The enzyme catalyses a 2'-deoxyribonucleoside 5'-diphosphate + ATP = a 2'-deoxyribonucleoside 5'-triphosphate + ADP. It catalyses the reaction a ribonucleoside 5'-diphosphate + ATP = a ribonucleoside 5'-triphosphate + ADP. Major role in the synthesis of nucleoside triphosphates other than ATP. The ATP gamma phosphate is transferred to the NDP beta phosphate via a ping-pong mechanism, using a phosphorylated active-site intermediate. This is Nucleoside diphosphate kinase from Thiobacillus denitrificans (strain ATCC 25259 / T1).